The primary structure comprises 81 residues: MKQGIHPDYHPVVFEDSSTGYKFLSGSTATSSETVKWEDGNEYPLIRVEVTSDSHPFYTGKQKFTQADGAVDKFNKKYGLK.

The protein belongs to the bacterial ribosomal protein bL31 family. Type B subfamily. In terms of assembly, part of the 50S ribosomal subunit.

The sequence is that of Large ribosomal subunit protein bL31B from Limosilactobacillus reuteri (strain DSM 20016) (Lactobacillus reuteri).